The chain runs to 648 residues: MTPLLELKDIRRSYPAGDEQVEVLKGISLDIYAGEMVAIVGASGSGKSTLMNILGCLDKATSGTYRVAGQDVATLDADALAQLRREHFGFIFQRYHLLSHLTAEQNVEVPAVYAGLERKQRLLRAQELLQRLGLEDRTEYYPAQLSGGQQQRVSIARALMNGGQVILADEPTGALDSHSGEEVMAILHQLRDRGHTVIIVTHDPQVAAQAERVIEIRDGEIVRNPPAVEKVNATGGTEPVVNTASGWRQFVSGFNEALTMAWRALAANKMRTLLTMLGIIIGIASVVSIVVVGDAAKQMVLADIRSIGTNTIDVYPGKDFGDDDPQYQQALKYDDLIAIQKQPWVASATPAVSQNLRLRYNNVDVAASANGVSGDYFNVYGMTFSEGNTFNQEQLNGRAQVVVLDSNTRRQLFPHKADVVGEVILVGNMPARVIGVAEEKQSMFGSSKVLRVWLPYSTMSGRVMGQSWLNSITVRVKEGFDSAEAEQQLTRLLSLRHGKKDFFTWNMDGVLKTVEKTTRTLQLFLTLVAVISLVVGGIGVMNIMLVSVTERTREIGIRMAVGARASDVLQQFLIEAVLVCLVGGALGITLSLLIAFTLQLFLPGWEIGFSPLALLLAFLCSTVTGILFGWLPARNAARLDPVDALARE.

One can recognise an ABC transporter domain in the interval 5–243; the sequence is LELKDIRRSY…TGGTEPVVNT (239 aa). 41–48 provides a ligand contact to ATP; the sequence is GASGSGKS. The next 4 membrane-spanning stretches (helical) occupy residues 273-293, 523-543, 576-596, and 611-631; these read LLTMLGIIIGIASVVSIVVVG, LFLTLVAVISLVVGGIGVMNI, AVLVCLVGGALGITLSLLIAF, and PLALLLAFLCSTVTGILFGWL.

This sequence belongs to the ABC transporter superfamily. Macrolide exporter (TC 3.A.1.122) family. In terms of assembly, homodimer. Part of the tripartite efflux system MacAB-TolC, which is composed of an inner membrane transporter, MacB, a periplasmic membrane fusion protein, MacA, and an outer membrane component, TolC. The complex forms a large protein conduit and can translocate molecules across both the inner and outer membranes. Interacts with MacA.

The protein localises to the cell inner membrane. Part of the tripartite efflux system MacAB-TolC. MacB is a non-canonical ABC transporter that contains transmembrane domains (TMD), which form a pore in the inner membrane, and an ATP-binding domain (NBD), which is responsible for energy generation. Confers resistance against macrolides. This chain is Macrolide export ATP-binding/permease protein MacB, found in Escherichia coli (strain UTI89 / UPEC).